A 276-amino-acid polypeptide reads, in one-letter code: MALQLNGVAVVTGAGSGIGKAVALAYAAEGARGVVIADLNLEAALQTARESESIATSPTYRALPVAVDVTDEKSVDRMVTAAVQAFDRIDYSVNSAGIGVKHHKPVYKAEVSEMNAFWQVNVLGTLNCIKSVTKVMKSQSVSTLNKQGKSRQVGRGVILNVGSCNSYIATPDIVPYTTTKHAVMGLTKSAALDLAPHEIRVNAICPGWVNTPMVTAAINGNPDLPEMMRTIIPMSRIAEPEEIADVVLFMTSPRSSYVTGVGWVVDGGTTLQVQTC.

NADP(+) is bound by residues I18, D68, K130, Y176, K180, V209, and T211. Y176 serves as the catalytic Proton acceptor. Catalysis depends on Y176, which acts as the Proton donor. The Lowers pKa of active site Tyr role is filled by K180.

The protein belongs to the short-chain dehydrogenases/reductases (SDR) family.

It catalyses the reaction (2R,9S)-annullatin H + A = (2R)-annullatin F + AH2. In terms of biological role, cytochrome P450 monooxygenase; part of the gene cluster that mediates the biosynthesis of annullatin D, an alkylated aromatic polyketide with a fused dihydrobenzofuran lactone ring system that exhibits potent agonistic activities toward the cannabinoid receptors. Within the pathway, anuF is involved in the formation of (2R)-annullatin F from the diastereomer of (2S,9S)-annullatin H (compound 12). The annullatin backbone 2-hydroxymethyl-3-pentylphenol is assembled from one acetyl-CoA starter unit and 5 malonyl-CoA elongation units by cooperation of the highly reducing polyketide synthase anuA, the short-chain dehydrogenase anuB and the oxidoreductase anuC, before being hydroxylated at the C-5 alkyl chain by the cytochrome P450 monooxygenase anuE to form (8S)-annullatin E. The prenyltransferase anuH subsequently installs one isoprenyl group at the benzene ring to form (8S)-annullatin J. Enzymatic or nonenzymatic dihydro-benzofuran ring formation between the prenyl and the phenolic hydroxyl groups in (8S)-annullatin J results in two diastereomers (2S,9S)-annullatin H and compound 12. The intermediate (2S,9S)-annullatin H is then converted to (2S,9S)-annullatin D by the FAD-linked oxidoreductase anuG-catalyzed five-member lactone ring formation. The isomer 12 acts as a substrate for the short-chain dehydrogenase anuF and is oxidized to (2R)-annullatin F, which is subsequently acetylated by an acetyltransferase leading to (2R)-annullatin G formation. The remaining enzymes identified within the cluster, anuD, anuI and anuJ, seem not to be involved in annullatin biosynthesis. The polypeptide is Short-chain dehydrogenase anuF (Penicillium roqueforti (strain FM164)).